The sequence spans 682 residues: Probable potassium transport system protein Kup (682 aa).

12 consecutive transmembrane segments (helical) span residues 13–33 (GLLVSIGIVYGDIGTSPLYVM), 55–75 (ISLILWTITLLTTVKYVLIAL), 98–118 (WLVIPALVGGAALLADGTLTP), 138–158 (IPVPNQNSVIMITIVILLFLF), 171–191 (TFGPIMLVWFTFLGLTGIMNL), 217–237 (VGVLILGAVFLATTGAEALYS), 250–270 (SWPYVFICLALNYLGQGVWIL), 295–315 (FFAIILATLAAIIASQALITG), 344–364 (LFIPSINKMLCAATIGIVFLF), 375–395 (GLAITVTMLMTTVLLFEYLSL), 405–425 (VFLLLFGAIETMFLISSLAKF), and 428–448 (GGYVTVIIAAFIGAIMYIWYF).

This sequence belongs to the HAK/KUP transporter (TC 2.A.72) family.

The protein localises to the cell membrane. The enzyme catalyses K(+)(in) + H(+)(in) = K(+)(out) + H(+)(out). In terms of biological role, transport of potassium into the cell. Likely operates as a K(+):H(+) symporter. The chain is Probable potassium transport system protein Kup from Lactobacillus gasseri (strain ATCC 33323 / DSM 20243 / BCRC 14619 / CIP 102991 / JCM 1131 / KCTC 3163 / NCIMB 11718 / NCTC 13722 / AM63).